The following is a 577-amino-acid chain: NKAP family protein UM04995 (577 aa).

Residues 1–479 form a disordered region; that stretch reads MPTLAERLGS…YGGALLPGEG (479 aa). Basic and acidic residues predominate over residues 20 to 31; it reads KSSHDREQELRS. Residues 36–49 show a composition bias toward polar residues; the sequence is SKQTSRNTAHQDLA. Residues 50-60 are compositionally biased toward basic and acidic residues; that stretch reads SSERRSIDREL. Positions 70 to 89 are enriched in low complexity; sequence SPLSSPQNGSSPRRQRGSPS. Basic and acidic residues-rich tracts occupy residues 127–163, 170–193, and 265–297; these read PRED…DSRR, SGDR…REAP, and DSSS…DKHH. Composition is skewed to basic residues over residues 298-316 and 325-336; these read SSSR…RRSS and SRHRHTRSSRSH. Acidic residues predominate over residues 340-350; the sequence is DDDDDDDEDVD. The span at 363 to 385 shows a compositional bias: basic and acidic residues; the sequence is KVSDGSDSGRSESETDSDSDARS. The segment covering 386–395 has biased composition (basic residues); sequence SRHRRRHHKS. Composition is skewed to basic and acidic residues over residues 396–408 and 417–439; these read DRSS…ESEK and SESE…RRDS. A coiled-coil region spans residues 529–570; sequence RKENQVISAEEKRTMLRLQAEEKAKKEREIVSQFKELVDTLQ.

The protein belongs to the NKAP family.

This is NKAP family protein UM04995 from Mycosarcoma maydis (Corn smut fungus).